Consider the following 752-residue polypeptide: Zinc finger protein 425 (752 aa).

The KRAB domain maps to 9–80 (VTFDDVALYF…EQGCLDKTRR (72 aa)). 19 consecutive C2H2-type zinc fingers follow at residues 190 to 212 (YSCYVCRKVFQVRRDLLKHKRSH), 246 to 268 (FQCSECEKSYFLKGSLVTHQVVH), 274 to 296 (YPCPECDKTFRYRANLKKHLCLH), 302 to 324 (FCCGECGRAFVQQCELTEHLRLH), 330 to 352 (FQCPQCDRCFRLKRGMKVHLTQH), 358 to 380 (FHCPECGRSFSRKAALKTHQRTH), 386 to 408 (FSCGECGRKFIYKIKLDEHIRVH), 414 to 436 (FSCPECNKSFRLKRSLKAHGLQH), 442 to 464 (FQCPECSRGFFWRNAMRAHQRLH), 470 to 492 (FPCAECGKRFTRPSKLACHTRVH), 498 to 520 (FPCGECKKTFSQQSRLTQHLKVH), 526 to 548 (FSCAECGRSFRRRAHLTEHTRLH), 554 to 576 (FQCPECDKSFSWKASMKFHQRMH), 582 to 604 (FACGECDKTYTHQSQLTEHLRLH), 610 to 632 (YQCPECEKTFRLKGNLKSHLLQH), 638 to 660 (FSCVMCGKSFTQQYRLTEHIRVH), 666 to 688 (FQCPECDKSYCIRGSLKVHLYKH), 694 to 716 (FQCPECGKGFLQKRSLKAHLCLH), and 722 to 744 (FSCDECGRSFTYVGALKTHIAVH).

This sequence belongs to the krueppel C2H2-type zinc-finger protein family.

It localises to the nucleus. The protein resides in the cytoplasm. Its function is as follows. Acts as a transcriptional repressor. This is Zinc finger protein 425 (ZNF425) from Homo sapiens (Human).